We begin with the raw amino-acid sequence, 256 residues long: 5'-nucleotidase SurE (256 aa).

Residues D8, D9, S40, and N92 each coordinate a divalent metal cation.

The protein belongs to the SurE nucleotidase family. A divalent metal cation is required as a cofactor.

Its subcellular location is the cytoplasm. It catalyses the reaction a ribonucleoside 5'-phosphate + H2O = a ribonucleoside + phosphate. In terms of biological role, nucleotidase that shows phosphatase activity on nucleoside 5'-monophosphates. This Sinorhizobium fredii (strain NBRC 101917 / NGR234) protein is 5'-nucleotidase SurE.